Here is a 63-residue protein sequence, read N- to C-terminus: DNA-directed RNA polymerase 7 kDa subunit (63 aa).

The protein belongs to the poxviridae DNA-directed RNA polymerase 7 kDa subunit family. The DNA-dependent RNA polymerase used for intermediate and late genes expression consists of eight subunits 147 kDa, 133 kDa, 35 kDa, 30 kDa, 22 kDa, 19 kDa, 18 kDa and 7 kDa totalling more than 500 kDa in mass. The same holoenzyme, with the addition of the transcription-specificity factor RAP94, is used for early gene expression.

Its subcellular location is the virion. The enzyme catalyses RNA(n) + a ribonucleoside 5'-triphosphate = RNA(n+1) + diphosphate. In terms of biological role, part of the DNA-dependent RNA polymerase which catalyzes the transcription of viral DNA into RNA using the four ribonucleoside triphosphates as substrates. Responsible for the transcription of early, intermediate and late genes. DNA-dependent RNA polymerase associates with the early transcription factor (ETF) thereby allowing the early genes transcription. Late transcription, and probably also intermediate transcription, require newly synthesized RNA polymerase. The polypeptide is DNA-directed RNA polymerase 7 kDa subunit (RPO7) (Rabbit fibroma virus (strain Kasza) (RFV)).